The primary structure comprises 129 residues: M-zodatoxin-Lt8d (129 aa).

The signal sequence occupies residues 1–20; sequence MKYFVVALALVAAFACIAES. Residues 21–60 constitute a propeptide that is removed on maturation; sequence KPAESEHELAEVEEENELADLEDAVWLEHLADLSDLEEAR. Positions 57–60 match the Processing quadruplet motif motif; sequence EEAR.

In terms of processing, cleavage of the propeptide depends on the processing quadruplet motif (XXXR, with at least one of X being E). In terms of tissue distribution, expressed by the venom gland.

Its subcellular location is the secreted. Its function is as follows. Insecticidal, cytolytic and antimicrobial peptide. Forms voltage-dependent, ion-permeable channels in membranes. At high concentration causes cell membrane lysis. The chain is M-zodatoxin-Lt8d (cit 1-4) from Lachesana tarabaevi (Spider).